The chain runs to 202 residues: Snake venom metalloproteinase leucurolysin-A (202 aa).

Residue Gln-1 is modified to Pyrrolidone carboxylic acid. The Peptidase M12B domain maps to 6–202; the sequence is RYIELVVVAD…HNPQCILNKP (197 aa). The Ca(2+) site is built by Glu-9 and Asp-93. 3 disulfide bridges follow: Cys-117/Cys-197, Cys-157/Cys-181, and Cys-159/Cys-164. Position 142 (His-142) interacts with Zn(2+). Glu-143 is a catalytic residue. Zn(2+)-binding residues include His-146 and His-152. Positions 197 and 200 each coordinate Ca(2+).

Belongs to the venom metalloproteinase (M12B) family. P-I subfamily. Monomer. The cofactor is Zn(2+). As to expression, expressed by the venom gland.

Its subcellular location is the secreted. With respect to regulation, inhibited by EDTA and 2-mercaptoethanol. Inhibited by 1 mM zinc ion and to a lesser extent by 1 mM calcium ion. Non-hemorrhagic metalloproteinase that hydrolyzes the alpha chains of fibrinogen, as well as fibrin, fibronectin and casein. Beta and gamma chains are also hydrolyzed, but more slowly. Thrombolytic activity is also observed. Induces detachment of endothelial cells followed by death, and inhibits endothelial cell adhesion to fibronectin. Induces edema in mouse paw. Inhibits ADP-induced platelet aggregation on human platelet-rich plasma with an IC(50) of 2.8 uM. The chain is Snake venom metalloproteinase leucurolysin-A from Bothrops leucurus (Whitetail lancehead).